The chain runs to 587 residues: 2-succinyl-5-enolpyruvyl-6-hydroxy-3-cyclohexene-1-carboxylate synthase (587 aa).

The protein belongs to the TPP enzyme family. MenD subfamily. Homodimer. Mg(2+) is required as a cofactor. It depends on Mn(2+) as a cofactor. Thiamine diphosphate serves as cofactor.

It catalyses the reaction isochorismate + 2-oxoglutarate + H(+) = 5-enolpyruvoyl-6-hydroxy-2-succinyl-cyclohex-3-ene-1-carboxylate + CO2. Its pathway is quinol/quinone metabolism; 1,4-dihydroxy-2-naphthoate biosynthesis; 1,4-dihydroxy-2-naphthoate from chorismate: step 2/7. The protein operates within cofactor biosynthesis; phylloquinone biosynthesis. Its function is as follows. Catalyzes the thiamine diphosphate-dependent decarboxylation of 2-oxoglutarate and the subsequent addition of the resulting succinic semialdehyde-thiamine pyrophosphate anion to isochorismate to yield 2-succinyl-5-enolpyruvyl-6-hydroxy-3-cyclohexene-1-carboxylate (SEPHCHC). This chain is 2-succinyl-5-enolpyruvyl-6-hydroxy-3-cyclohexene-1-carboxylate synthase, found in Prochlorococcus marinus (strain AS9601).